Here is a 103-residue protein sequence, read N- to C-terminus: Movement protein TGB2 (103 aa).

The Cytoplasmic portion of the chain corresponds to 1–8 (MSFAPPPD). The helical transmembrane segment at 9-29 (YSKIYLALGCGLGLGFVVYAS) threads the bilayer. Residues 30 to 70 (RVNHLPHVGDNTHNLPHGGQYCDGNKRVLYSGPKSGSSPTN) are Lumenal-facing. A helical transmembrane segment spans residues 71 to 91 (NLWPFITVIALTLAILLTSCP). Residues 92–103 (RRRVCIRCSQHH) lie on the Cytoplasmic side of the membrane.

It belongs to the Tymovirales TGBp2 protein family.

It is found in the host endoplasmic reticulum membrane. Plays a role in viral cell-to-cell propagation, by facilitating genome transport to neighboring plant cells through plasmosdesmata,. The chain is Movement protein TGB2 from Allium cepa var. aggregatum (Shallot).